The chain runs to 407 residues: Bifunctional enzyme IspD/IspF (407 aa).

The 2-C-methyl-D-erythritol 4-phosphate cytidylyltransferase stretch occupies residues 1 to 246 (MTEASENASA…SSERTHFPDI (246 aa)). The tract at residues 247–407 (RTGNGYDVHA…SVVFPGEVPE (161 aa)) is 2-C-methyl-D-erythritol 2,4-cyclodiphosphate synthase. Residues Asp253 and His255 each coordinate a divalent metal cation. Residues 253–255 (DVH) and 279–280 (HS) each bind 4-CDP-2-C-methyl-D-erythritol 2-phosphate. An a divalent metal cation-binding site is contributed by His287. 4-CDP-2-C-methyl-D-erythritol 2-phosphate contacts are provided by residues 301–303 (DIG), 377–380 (TTNE), Phe384, and Arg387.

It in the N-terminal section; belongs to the IspD/TarI cytidylyltransferase family. IspD subfamily. This sequence in the C-terminal section; belongs to the IspF family. Requires a divalent metal cation as cofactor.

The enzyme catalyses 2-C-methyl-D-erythritol 4-phosphate + CTP + H(+) = 4-CDP-2-C-methyl-D-erythritol + diphosphate. It catalyses the reaction 4-CDP-2-C-methyl-D-erythritol 2-phosphate = 2-C-methyl-D-erythritol 2,4-cyclic diphosphate + CMP. Its pathway is isoprenoid biosynthesis; isopentenyl diphosphate biosynthesis via DXP pathway; isopentenyl diphosphate from 1-deoxy-D-xylulose 5-phosphate: step 2/6. The protein operates within isoprenoid biosynthesis; isopentenyl diphosphate biosynthesis via DXP pathway; isopentenyl diphosphate from 1-deoxy-D-xylulose 5-phosphate: step 4/6. Functionally, bifunctional enzyme that catalyzes the formation of 4-diphosphocytidyl-2-C-methyl-D-erythritol from CTP and 2-C-methyl-D-erythritol 4-phosphate (MEP) (IspD), and catalyzes the conversion of 4-diphosphocytidyl-2-C-methyl-D-erythritol 2-phosphate (CDP-ME2P) to 2-C-methyl-D-erythritol 2,4-cyclodiphosphate (ME-CPP) with a corresponding release of cytidine 5-monophosphate (CMP) (IspF). The chain is Bifunctional enzyme IspD/IspF from Mesorhizobium japonicum (strain LMG 29417 / CECT 9101 / MAFF 303099) (Mesorhizobium loti (strain MAFF 303099)).